The sequence spans 313 residues: ADP-L-glycero-D-manno-heptose-6-epimerase (313 aa).

NADP(+) is bound by residues 10–11 (MI), 31–32 (DN), Lys38, Arg53, 75–79 (EGACS), and Asn92. Tyr139 (proton acceptor) is an active-site residue. Lys143 lines the NADP(+) pocket. Residue Asn174 participates in substrate binding. The NADP(+) site is built by Val175 and Lys183. Lys183 serves as the catalytic Proton acceptor. Residues Ser185, His192, 206–209 (FAGS), Arg214, and Tyr277 contribute to the substrate site.

Belongs to the NAD(P)-dependent epimerase/dehydratase family. HldD subfamily. In terms of assembly, homopentamer. Requires NADP(+) as cofactor.

The catalysed reaction is ADP-D-glycero-beta-D-manno-heptose = ADP-L-glycero-beta-D-manno-heptose. The protein operates within nucleotide-sugar biosynthesis; ADP-L-glycero-beta-D-manno-heptose biosynthesis; ADP-L-glycero-beta-D-manno-heptose from D-glycero-beta-D-manno-heptose 7-phosphate: step 4/4. It functions in the pathway bacterial outer membrane biogenesis; LPS core biosynthesis. Its function is as follows. Catalyzes the interconversion between ADP-D-glycero-beta-D-manno-heptose and ADP-L-glycero-beta-D-manno-heptose via an epimerization at carbon 6 of the heptose. This is ADP-L-glycero-D-manno-heptose-6-epimerase from Vibrio vulnificus (strain YJ016).